The sequence spans 95 residues: UPF0235 protein Ssed_1229 (95 aa).

It belongs to the UPF0235 family.

This Shewanella sediminis (strain HAW-EB3) protein is UPF0235 protein Ssed_1229.